The chain runs to 470 residues: 6-phospho-beta-galactosidase (470 aa).

5 residues coordinate D-galactose 6-phosphate: Gln19, His116, Asn159, Glu160, and Asn297. Glu160 acts as the Proton donor in catalysis. The active-site Nucleophile is Glu375. Residues Ser430, Trp431, Lys437, and Tyr439 each coordinate D-galactose 6-phosphate.

Belongs to the glycosyl hydrolase 1 family.

The enzyme catalyses a 6-phospho-beta-D-galactoside + H2O = D-galactose 6-phosphate + an alcohol. The protein operates within carbohydrate metabolism; lactose degradation; D-galactose 6-phosphate and beta-D-glucose from lactose 6-phosphate: step 1/1. This Staphylococcus aureus (strain USA300) protein is 6-phospho-beta-galactosidase.